A 270-amino-acid chain; its full sequence is Malonyl-[acyl-carrier protein] O-methyltransferase (270 aa).

This sequence belongs to the methyltransferase superfamily.

It catalyses the reaction malonyl-[ACP] + S-adenosyl-L-methionine = malonyl-[ACP] methyl ester + S-adenosyl-L-homocysteine. It functions in the pathway cofactor biosynthesis; biotin biosynthesis. In terms of biological role, converts the free carboxyl group of a malonyl-thioester to its methyl ester by transfer of a methyl group from S-adenosyl-L-methionine (SAM). It allows to synthesize pimeloyl-ACP via the fatty acid synthetic pathway. The sequence is that of Malonyl-[acyl-carrier protein] O-methyltransferase from Magnetococcus marinus (strain ATCC BAA-1437 / JCM 17883 / MC-1).